Consider the following 352-residue polypeptide: Pejvakin (352 aa).

The protein belongs to the gasdermin family. Interacts with MAP1LC3B; interaction is direct. Interacts with IQGAP1. Interacts with ROCK2. Interacts with TRIOBP.

The protein localises to the peroxisome membrane. The protein resides in the cell projection. It is found in the cilium. In terms of biological role, peroxisome-associated protein required to protect auditory hair cells against noise-induced damage. Acts by regulating noise-induced peroxisome proliferation in auditory hair cells and neurons, and promoting autophagic degradation of damaged peroxisomes (pexophagy). Noise overexposure increases reactive oxygen species (ROS) levels, causing oxidative damage to auditory hair cells and resulting in hearing loss. PJVK acts as a ROS sensor that recruits the autophagy machinery to trigger pexophagy of peroxisomes damaged by oxidative stress. In addition to pexophagy, also required to promote peroxisome proliferation in response to sound overstimulation. This Homo sapiens (Human) protein is Pejvakin.